Here is a 196-residue protein sequence, read N- to C-terminus: ATP-dependent Clp protease proteolytic subunit (196 aa).

Residue Ser-101 is the Nucleophile of the active site. His-126 is an active-site residue.

The protein belongs to the peptidase S14 family. In terms of assembly, component of the chloroplastic Clp protease core complex.

Its subcellular location is the plastid. The protein localises to the chloroplast stroma. The enzyme catalyses Hydrolysis of proteins to small peptides in the presence of ATP and magnesium. alpha-casein is the usual test substrate. In the absence of ATP, only oligopeptides shorter than five residues are hydrolyzed (such as succinyl-Leu-Tyr-|-NHMec, and Leu-Tyr-Leu-|-Tyr-Trp, in which cleavage of the -Tyr-|-Leu- and -Tyr-|-Trp bonds also occurs).. Cleaves peptides in various proteins in a process that requires ATP hydrolysis. Has a chymotrypsin-like activity. Plays a major role in the degradation of misfolded proteins. This is ATP-dependent Clp protease proteolytic subunit from Nasturtium officinale (Watercress).